The primary structure comprises 350 residues: Xylene/toluene monooxygenase electron transfer component XylA (350 aa).

Residues 16 to 108 (PESTVSVRGQ…DLEIELDTVL (93 aa)) form the 2Fe-2S ferredoxin-type domain. Positions 52, 57, 60, and 92 each coordinate [2Fe-2S] cluster. The segment at 109 to 350 (GQALVPIETS…ADRFYNRPPC (242 aa)) is ferredoxin--NADH reductase. Positions 114–213 (PIETSALISK…RAPYGQFGLH (100 aa)) constitute an FAD-binding FR-type domain.

This sequence belongs to the bacterial ring-hydroxylating dioxygenase ferredoxin reductase family. Monomer. The xylene/toluene monooxygenase is composed of two subunits: the electron transfer component XylA and the hydroxylase component XylM. Requires FAD as cofactor. The cofactor is [2Fe-2S] cluster.

The protein resides in the cell inner membrane. The enzyme catalyses 2 reduced [2Fe-2S]-[ferredoxin] + NAD(+) + H(+) = 2 oxidized [2Fe-2S]-[ferredoxin] + NADH. The reductase activity is completely inhibited by quercetin (a common inhibitor of mammalian oxidoreductases) and p-chloromercuribenzoate, but not by iodoacetimide, N-ethylmaleimide and pyrrazole. In terms of biological role, component of a monooxygenase that catalyzes the first step in the degradation of xylenes and toluenes. XylA is responsible for the transport of electrons from the electron donor NADH to the terminal hydroxylase component, XylM. The chain is Xylene/toluene monooxygenase electron transfer component XylA from Pseudomonas putida (Arthrobacter siderocapsulatus).